The following is a 172-amino-acid chain: 3-hydroxydecanoyl-[acyl-carrier-protein] dehydratase (172 aa).

Histidine 71 is an active-site residue.

The protein belongs to the thioester dehydratase family. FabA subfamily. Homodimer.

Its subcellular location is the cytoplasm. The catalysed reaction is a (3R)-hydroxyacyl-[ACP] = a (2E)-enoyl-[ACP] + H2O. It carries out the reaction (3R)-hydroxydecanoyl-[ACP] = (2E)-decenoyl-[ACP] + H2O. It catalyses the reaction (2E)-decenoyl-[ACP] = (3Z)-decenoyl-[ACP]. It functions in the pathway lipid metabolism; fatty acid biosynthesis. In terms of biological role, necessary for the introduction of cis unsaturation into fatty acids. Catalyzes the dehydration of (3R)-3-hydroxydecanoyl-ACP to E-(2)-decenoyl-ACP and then its isomerization to Z-(3)-decenoyl-ACP. Can catalyze the dehydratase reaction for beta-hydroxyacyl-ACPs with saturated chain lengths up to 16:0, being most active on intermediate chain length. The protein is 3-hydroxydecanoyl-[acyl-carrier-protein] dehydratase of Blochmanniella pennsylvanica (strain BPEN).